A 753-amino-acid chain; its full sequence is MSRQSTDTAVSSQRLLASAIGVAITAIAAPQAAQADEAGQKKTDKDRVLSLDAATIVGEQQDETTYNVDRSASKKYTAPLLDTPKTVTVIPQQVIKDTGALTLADALRTTPGITFGAGEGGNPAGDRPFIRGFNAESDTFLDGMRDVASQTREVFNVEQIEVSKGPGSAYTGAGSTGGSLNLISKTAKQDNFTDAGFTWGSDQTRRTTLDVNRMIGDNAAFRLNLMKHDAHVAGRDEVSVSRWGVAPTVTFGFDTPTRATLSYYHLSTDDMPDYGLPLTNVNRSKANPSKPASVDRDNFYGLKDRDYRKSTTDSGTFRIEHDLNDNLTLSNSTRLVRTTLDYIVSNPDDSRGNVANGYVYRSAKSRNSTSKGWVNQTDLKANFETGFIKHTLVTGLEFSYEDVHNRPYAITSGGGAGNTCNARLLASGDCTSLNRPTPGDNWTGSITDGLAYTDTDTKTSAAYVFDTLKLSEQWELNLGLRYDDFDTKSSGYQTAGRNGPAGYFKRENNSHFWNYQTGLVYKPAPNGSIYLAWSTSSNPTGETGGEGQADISVGNNGLDPERNRNLELGTKWAFFDDALSLNAALFRTDKTNARVASPDVSTLQVLDGEQRVQGVELGFNGKLTEKWKVFGGYTYLDSEIRKSTVKSDEGNKMPQTAQNNFTLWTTYDLLQNFTIGGGTTYVDKQYGNTANSTYIPSYWRYDAMASYKVSKNVDLQLNVQNLTDKRYFDQVYSTHMAHVAPGRTALLGVNFHF.

Residues 1–35 form the signal peptide; sequence MSRQSTDTAVSSQRLLASAIGVAITAIAAPQAAQA. The TBDR plug domain maps to 79–185; sequence PLLDTPKTVT…TGGSLNLISK (107 aa). The region spanning 190–753 is the TBDR beta-barrel domain; it reads DNFTDAGFTW…TALLGVNFHF (564 aa). Cysteine 420 and cysteine 430 are disulfide-bonded.

The protein belongs to the TonB-dependent receptor family.

The protein resides in the cell outer membrane. In terms of biological role, involved in the initial step of iron uptake by binding iron chelating siderophores, thereby allowing extraction of iron from the environment. Probably involved in the transport of siderophores, including host catecholamines such as dopamine. In Pseudomonas aeruginosa (strain ATCC 15692 / DSM 22644 / CIP 104116 / JCM 14847 / LMG 12228 / 1C / PRS 101 / PAO1), this protein is Probable TonB-dependent siderophore receptor PiuA.